A 261-amino-acid chain; its full sequence is Secreted RxLR effector protein 154 (261 aa).

Residues 1-18 (MRRCALLFRLFLISYSCS) form the signal peptide. The RxLR-dEER signature appears at 49 to 64 (RILQADDPEHIRTEER).

This sequence belongs to the RxLR effector family.

Its subcellular location is the secreted. It localises to the host cell membrane. In terms of biological role, secreted effector that completely suppresses the host cell death induced by cell death-inducing proteins. The polypeptide is Secreted RxLR effector protein 154 (Plasmopara viticola (Downy mildew of grapevine)).